We begin with the raw amino-acid sequence, 356 residues long: Uroporphyrinogen decarboxylase (356 aa).

Residues Arg27–Arg31, Asp77, Tyr154, Ser209, and His327 contribute to the substrate site.

It belongs to the uroporphyrinogen decarboxylase family. As to quaternary structure, homodimer.

Its subcellular location is the cytoplasm. The enzyme catalyses uroporphyrinogen III + 4 H(+) = coproporphyrinogen III + 4 CO2. It participates in porphyrin-containing compound metabolism; protoporphyrin-IX biosynthesis; coproporphyrinogen-III from 5-aminolevulinate: step 4/4. Catalyzes the decarboxylation of four acetate groups of uroporphyrinogen-III to yield coproporphyrinogen-III. The chain is Uroporphyrinogen decarboxylase from Aromatoleum aromaticum (strain DSM 19018 / LMG 30748 / EbN1) (Azoarcus sp. (strain EbN1)).